Here is a 480-residue protein sequence, read N- to C-terminus: Cysteine--tRNA ligase (480 aa).

Cys-31 is a Zn(2+) binding site. The 'HIGH' region motif lies at 33–43 (PTVYDSSHIGH). Zn(2+) contacts are provided by Cys-211, His-236, and Glu-240. A 'KMSKS' region motif is present at residues 269–273 (KMSKS). Position 272 (Lys-272) interacts with ATP.

This sequence belongs to the class-I aminoacyl-tRNA synthetase family. Zn(2+) is required as a cofactor.

It carries out the reaction tRNA(Cys) + L-cysteine + ATP = L-cysteinyl-tRNA(Cys) + AMP + diphosphate. This chain is Cysteine--tRNA ligase, found in Encephalitozoon cuniculi (strain GB-M1) (Microsporidian parasite).